A 533-amino-acid chain; its full sequence is Glycoprotein (533 aa).

The N-terminal stretch at 1–19 is a signal peptide; the sequence is MPLNAVIFTLLLRCSICLG. At 20-459 the chain is on the virion surface side; the sequence is KFPFYTIPDK…DLGLPEWKRY (440 aa). Residues 460 to 480 traverse the membrane as a helical segment; the sequence is FLIGVSAVALLALSIIIAVCC. Cys-480 is lipidated: S-palmitoyl cysteine; by host. The Intravirion segment spans residues 481–533; the sequence is KRFRKRKKSKPGPVELTRKVSVISKGNGPVPSWESYKEGTTGDVRNTTPSTRE. The tract at residues 492 to 533 is disordered; sequence GPVELTRKVSVISKGNGPVPSWESYKEGTTGDVRNTTPSTRE. Polar residues predominate over residues 523–533; the sequence is DVRNTTPSTRE.

The protein belongs to the lyssavirus glycoprotein family. Homotrimer. Interacts with matrix protein. Glycosylated and palmitoylated by host. Glycosylation is crucial for glycoprotein export at the cell surface.

Its subcellular location is the virion membrane. Attaches the virus to host cellular receptor, inducing endocytosis of the virion. In the endosome, the acidic pH induces conformational changes in the glycoprotein trimer, which trigger fusion between virus and cell membrane. This Duvenhage virus (DUVV) protein is Glycoprotein (G).